The chain runs to 438 residues: UDP-N-acetylmuramoylalanine--D-glutamate ligase (438 aa).

112–118 lines the ATP pocket; that stretch reads GSNGKST.

Belongs to the MurCDEF family.

The protein localises to the cytoplasm. The catalysed reaction is UDP-N-acetyl-alpha-D-muramoyl-L-alanine + D-glutamate + ATP = UDP-N-acetyl-alpha-D-muramoyl-L-alanyl-D-glutamate + ADP + phosphate + H(+). It functions in the pathway cell wall biogenesis; peptidoglycan biosynthesis. Functionally, cell wall formation. Catalyzes the addition of glutamate to the nucleotide precursor UDP-N-acetylmuramoyl-L-alanine (UMA). The sequence is that of UDP-N-acetylmuramoylalanine--D-glutamate ligase from Salmonella typhimurium (strain LT2 / SGSC1412 / ATCC 700720).